The following is an 830-amino-acid chain: BLOC-2 complex member HPS5 homolog (830 aa).

3 WD repeats span residues 25-64 (RNNS…FLAI), 67-106 (SQLG…STDG), and 114-153 (GGPA…GRNI). Residues 578 to 604 (DTETIVRLLRKLETLMEENEEPNARLK) are a coiled coil.

It belongs to the HPS5 family.

Has a role in the biogenesis of eye pigment granules. Eye pigment granules are specialized forms of late endosomes or lysosomes. Biogenesis of pigment granules in the eye requires molecular components required for protein delivery to lysosomes. The polypeptide is BLOC-2 complex member HPS5 homolog (Anopheles gambiae (African malaria mosquito)).